A 163-amino-acid polypeptide reads, in one-letter code: Ureidoglycolate lyase (163 aa).

This sequence belongs to the ureidoglycolate lyase family. Homodimer. Ni(2+) serves as cofactor.

The enzyme catalyses (S)-ureidoglycolate = urea + glyoxylate. It functions in the pathway nitrogen metabolism; (S)-allantoin degradation. Functionally, catalyzes the catabolism of the allantoin degradation intermediate (S)-ureidoglycolate, generating urea and glyoxylate. Involved in the utilization of allantoin as nitrogen source. The sequence is that of Ureidoglycolate lyase from Mesorhizobium japonicum (strain LMG 29417 / CECT 9101 / MAFF 303099) (Mesorhizobium loti (strain MAFF 303099)).